Reading from the N-terminus, the 426-residue chain is Serine--tRNA ligase (426 aa).

233–235 (TAE) provides a ligand contact to L-serine. 264–266 (RAE) serves as a coordination point for ATP. Glu287 lines the L-serine pocket. Residue 351 to 354 (EISS) coordinates ATP. Ser387 contacts L-serine.

The protein belongs to the class-II aminoacyl-tRNA synthetase family. Type-1 seryl-tRNA synthetase subfamily. Homodimer. The tRNA molecule binds across the dimer.

It is found in the cytoplasm. The catalysed reaction is tRNA(Ser) + L-serine + ATP = L-seryl-tRNA(Ser) + AMP + diphosphate + H(+). It catalyses the reaction tRNA(Sec) + L-serine + ATP = L-seryl-tRNA(Sec) + AMP + diphosphate + H(+). It participates in aminoacyl-tRNA biosynthesis; selenocysteinyl-tRNA(Sec) biosynthesis; L-seryl-tRNA(Sec) from L-serine and tRNA(Sec): step 1/1. In terms of biological role, catalyzes the attachment of serine to tRNA(Ser). Is also able to aminoacylate tRNA(Sec) with serine, to form the misacylated tRNA L-seryl-tRNA(Sec), which will be further converted into selenocysteinyl-tRNA(Sec). The chain is Serine--tRNA ligase from Clostridium novyi (strain NT).